A 138-amino-acid chain; its full sequence is Actophorin (138 aa).

Position 2 is a blocked amino end (Ser) (S2). Positions 3-134 constitute an ADF-H domain; sequence GIAVSDDCVQ…SEDAVSERAK (132 aa).

Belongs to the actin-binding proteins ADF family. As to quaternary structure, monomer.

It localises to the cytoplasm. Its function is as follows. Forms a one to one complex with monomeric actin. Can regulate the pool available for polymerization. Severs actin filaments in a dose-dependent manner. This Acanthamoeba castellanii (Amoeba) protein is Actophorin.